The sequence spans 384 residues: Dual-specificity RNA methyltransferase RlmN (384 aa).

Catalysis depends on Glu93, which acts as the Proton acceptor. Residues Glu99 to Asp339 form the Radical SAM core domain. A disulfide bond links Cys106 and Cys344. Residues Cys113, Cys117, and Cys120 each contribute to the [4Fe-4S] cluster site. Residues Gly170–Glu171, Ser202, Ser224–His226, and Asn301 contribute to the S-adenosyl-L-methionine site. Cys344 (S-methylcysteine intermediate) is an active-site residue.

Belongs to the radical SAM superfamily. RlmN family. Requires [4Fe-4S] cluster as cofactor.

The protein localises to the cytoplasm. It catalyses the reaction adenosine(2503) in 23S rRNA + 2 reduced [2Fe-2S]-[ferredoxin] + 2 S-adenosyl-L-methionine = 2-methyladenosine(2503) in 23S rRNA + 5'-deoxyadenosine + L-methionine + 2 oxidized [2Fe-2S]-[ferredoxin] + S-adenosyl-L-homocysteine. The catalysed reaction is adenosine(37) in tRNA + 2 reduced [2Fe-2S]-[ferredoxin] + 2 S-adenosyl-L-methionine = 2-methyladenosine(37) in tRNA + 5'-deoxyadenosine + L-methionine + 2 oxidized [2Fe-2S]-[ferredoxin] + S-adenosyl-L-homocysteine. In terms of biological role, specifically methylates position 2 of adenine 2503 in 23S rRNA and position 2 of adenine 37 in tRNAs. m2A2503 modification seems to play a crucial role in the proofreading step occurring at the peptidyl transferase center and thus would serve to optimize ribosomal fidelity. The chain is Dual-specificity RNA methyltransferase RlmN from Cupriavidus metallidurans (strain ATCC 43123 / DSM 2839 / NBRC 102507 / CH34) (Ralstonia metallidurans).